Consider the following 170-residue polypeptide: Protein-export protein SecB (170 aa).

The protein belongs to the SecB family. Homotetramer, a dimer of dimers. One homotetramer interacts with 1 SecA dimer.

The protein resides in the cytoplasm. One of the proteins required for the normal export of preproteins out of the cell cytoplasm. It is a molecular chaperone that binds to a subset of precursor proteins, maintaining them in a translocation-competent state. It also specifically binds to its receptor SecA. In Xanthomonas axonopodis pv. citri (strain 306), this protein is Protein-export protein SecB.